The chain runs to 345 residues: Methylthioribose-1-phosphate isomerase (345 aa).

Substrate-binding positions include 47-49 (RGA), R90, and Q197. Catalysis depends on D238, which acts as the Proton donor. 248-249 (NK) lines the substrate pocket.

The protein belongs to the eIF-2B alpha/beta/delta subunits family. MtnA subfamily.

It catalyses the reaction 5-(methylsulfanyl)-alpha-D-ribose 1-phosphate = 5-(methylsulfanyl)-D-ribulose 1-phosphate. It participates in amino-acid biosynthesis; L-methionine biosynthesis via salvage pathway; L-methionine from S-methyl-5-thio-alpha-D-ribose 1-phosphate: step 1/6. Catalyzes the interconversion of methylthioribose-1-phosphate (MTR-1-P) into methylthioribulose-1-phosphate (MTRu-1-P). The polypeptide is Methylthioribose-1-phosphate isomerase (Thermoanaerobacter pseudethanolicus (strain ATCC 33223 / 39E) (Clostridium thermohydrosulfuricum)).